The sequence spans 107 residues: U1-lycotoxin-Ls1b (107 aa).

The N-terminal stretch at 1-20 (MMKVLVVVALLPTLISYSSS) is a signal peptide. A propeptide spanning residues 21-41 (EGIDDLEADELLSLMANEQTR) is cleaved from the precursor. Intrachain disulfides connect C44–C59, C51–C68, C58–C86, and C70–C84.

Belongs to the neurotoxin 19 (CSTX) family. 04 (U1-Lctx) subfamily. In terms of tissue distribution, expressed by the venom gland.

The protein resides in the secreted. The chain is U1-lycotoxin-Ls1b from Lycosa singoriensis (Wolf spider).